Reading from the N-terminus, the 468-residue chain is Trehalose-2-sulfate acyltransferase PapA2 (468 aa).

Belongs to the PapA acyltransferase family.

It catalyses the reaction 2-O-sulfo-alpha,alpha-trehalose + hexadecanoyl-CoA = 2-O-sulfo-2'-O-hexadecanoyl-alpha,alpha-trehalose + CoA. In terms of biological role, catalyzes the acylation of trehalose-2-sulfate by adding the palmitoyl group at the 2'-position to yield the intermediate trehalose-2-sulfate-2'-palmitate (SL659). In Mycobacterium tuberculosis (strain ATCC 25177 / H37Ra), this protein is Trehalose-2-sulfate acyltransferase PapA2 (papA2).